An 839-amino-acid chain; its full sequence is Capsid-associated protein Vp91 (839 aa).

A signal peptide spans 1 to 23 (MMSGVMLLVFAIFLIIAFTLIYL). Residues 148-197 (CVPVPPCDNKPAGRYPMDERLLDTLVLNQHLDKDYSSNEHLYHPTFYLRC) form a C2HC BV-type zinc finger. 2 disulfides stabilise this stretch: Cys-208–Cys-221 and Cys-261–Cys-274. Residue Asn-211 is glycosylated (N-linked (GlcNAc...) asparagine; by host). Positions 224–282 (NELCENRPDGYILSYFPSNLLVNQFMQCVSGRHVVRECPANKIFDRNLMSCVEAHPCTF) constitute a Chitin-binding type-2 domain. N-linked (GlcNAc...) asparagine; by host glycosylation is found at Asn-306, Asn-337, Asn-613, Asn-619, and Asn-639. Disordered stretches follow at residues 624–644 (SPVF…SISP) and 659–690 (EPDG…LPSP). Residues 667-678 (APPPTAPPPPSE) are compositionally biased toward pro residues.

It is found in the virion. Its function is as follows. Probable capsid-associated protein. The chain is Capsid-associated protein Vp91 (p95) from Bombyx mori nuclear polyhedrosis virus (BmNPV).